Here is a 134-residue protein sequence, read N- to C-terminus: Cytochrome c-type biogenesis protein CcmE (134 aa).

The Cytoplasmic portion of the chain corresponds to 1-7; that stretch reads MKRKYRR. Residues 8-28 form a helical; Signal-anchor for type II membrane protein membrane-spanning segment; that stretch reads LFVVIITLSIFAGSVVFVLGK. Residues 29–134 are Periplasmic-facing; that stretch reads LKNNVSFFYT…MPNKYKTNNL (106 aa). Residues histidine 120 and tyrosine 124 each contribute to the heme site.

This sequence belongs to the CcmE/CycJ family.

The protein localises to the cell inner membrane. Heme chaperone required for the biogenesis of c-type cytochromes. Transiently binds heme delivered by CcmC and transfers the heme to apo-cytochromes in a process facilitated by CcmF and CcmH. This chain is Cytochrome c-type biogenesis protein CcmE, found in Ehrlichia ruminantium (strain Gardel).